A 428-amino-acid chain; its full sequence is C4-dicarboxylate transport protein (428 aa).

A run of 8 helical transmembrane segments spans residues 8–28, 44–64, 76–96, 142–162, 184–204, 222–242, 326–346, and 352–372; these read SLYF…HFYP, LIKM…IAGM, VALL…LIIV, IGAF…LFGF, VIFG…FGAM, LIIC…GSIA, IVHQ…AAGV, and IVLA…LALI.

Belongs to the dicarboxylate/amino acid:cation symporter (DAACS) (TC 2.A.23) family.

It is found in the cell inner membrane. Its function is as follows. Responsible for the transport of dicarboxylates such as succinate, fumarate, and malate from the periplasm across the membrane. The sequence is that of C4-dicarboxylate transport protein from Shigella dysenteriae serotype 1 (strain Sd197).